The chain runs to 420 residues: Gamma-glutamyl phosphate reductase (420 aa).

This sequence belongs to the gamma-glutamyl phosphate reductase family.

The protein resides in the cytoplasm. The enzyme catalyses L-glutamate 5-semialdehyde + phosphate + NADP(+) = L-glutamyl 5-phosphate + NADPH + H(+). Its pathway is amino-acid biosynthesis; L-proline biosynthesis; L-glutamate 5-semialdehyde from L-glutamate: step 2/2. Functionally, catalyzes the NADPH-dependent reduction of L-glutamate 5-phosphate into L-glutamate 5-semialdehyde and phosphate. The product spontaneously undergoes cyclization to form 1-pyrroline-5-carboxylate. In Shewanella amazonensis (strain ATCC BAA-1098 / SB2B), this protein is Gamma-glutamyl phosphate reductase.